The chain runs to 515 residues: Glucose-6-phosphate 1-dehydrogenase 6, cytoplasmic (515 aa).

Residues Gly38–Lys45, Arg73, Tyr155, and Lys182 each bind NADP(+). D-glucose 6-phosphate-binding positions include Lys182, His212–Lys216, Glu250, and Asp269. Residue His274 is the Proton acceptor of the active site. Lys357 contacts NADP(+). Positions 360 and 365 each coordinate D-glucose 6-phosphate. NADP(+) contacts are provided by Lys366, Arg370, and Arg394. Gln396 is a D-glucose 6-phosphate binding site. NADP(+) contacts are provided by residues Tyr402 to Lys404, Asp422 to Ser424, Arg488, and Trp510.

Belongs to the glucose-6-phosphate dehydrogenase family. In terms of assembly, forms homodimer. As to expression, expressed in roots, leaves, stems, buds, flowers and siliques.

The protein resides in the cytoplasm. Its subcellular location is the cytosol. The catalysed reaction is D-glucose 6-phosphate + NADP(+) = 6-phospho-D-glucono-1,5-lactone + NADPH + H(+). The protein operates within carbohydrate degradation; pentose phosphate pathway; D-ribulose 5-phosphate from D-glucose 6-phosphate (oxidative stage): step 1/3. With respect to regulation, regulated by metabolites. Functionally, catalyzes the rate-limiting step of the oxidative pentose-phosphate pathway, which represents a route for the dissimilation of carbohydrates besides glycolysis. The main function of this enzyme is to provide reducing power (NADPH) and pentose phosphates for fatty acid and nucleic acid synthesis which are involved in membrane synthesis and cell division. In Arabidopsis thaliana (Mouse-ear cress), this protein is Glucose-6-phosphate 1-dehydrogenase 6, cytoplasmic.